We begin with the raw amino-acid sequence, 347 residues long: tRNA dimethylallyltransferase (347 aa).

Position 20–27 (20–27 (GPTASGKT)) interacts with ATP. Residue 22 to 27 (TASGKT) participates in substrate binding. 3 interaction with substrate tRNA regions span residues 45–48 (DSAM), 169–173 (QRLMR), and 275–280 (RCVGYR).

This sequence belongs to the IPP transferase family. In terms of assembly, monomer. Mg(2+) is required as a cofactor.

It carries out the reaction adenosine(37) in tRNA + dimethylallyl diphosphate = N(6)-dimethylallyladenosine(37) in tRNA + diphosphate. Functionally, catalyzes the transfer of a dimethylallyl group onto the adenine at position 37 in tRNAs that read codons beginning with uridine, leading to the formation of N6-(dimethylallyl)adenosine (i(6)A). This is tRNA dimethylallyltransferase from Marinobacter nauticus (strain ATCC 700491 / DSM 11845 / VT8) (Marinobacter aquaeolei).